A 314-amino-acid polypeptide reads, in one-letter code: Malate dehydrogenase (314 aa).

NAD(+) is bound by residues 7 to 13 (GAAGGIG) and aspartate 34. Residues arginine 81 and arginine 87 each contribute to the substrate site. Residues asparagine 94 and 117–119 (ITN) contribute to the NAD(+) site. The substrate site is built by asparagine 119 and arginine 153. Histidine 177 (proton acceptor) is an active-site residue. Position 230 (methionine 230) interacts with NAD(+).

It belongs to the LDH/MDH superfamily. MDH type 1 family. As to quaternary structure, homodimer.

The enzyme catalyses (S)-malate + NAD(+) = oxaloacetate + NADH + H(+). Its function is as follows. Catalyzes the reversible oxidation of malate to oxaloacetate. The protein is Malate dehydrogenase of Glaesserella parasuis serovar 5 (strain SH0165) (Haemophilus parasuis).